The chain runs to 528 residues: Cytochrome P450 1A5 (528 aa).

C467 provides a ligand contact to heme.

This sequence belongs to the cytochrome P450 family. Heme is required as a cofactor.

Its subcellular location is the endoplasmic reticulum membrane. The protein resides in the microsome membrane. It catalyses the reaction an organic molecule + reduced [NADPH--hemoprotein reductase] + O2 = an alcohol + oxidized [NADPH--hemoprotein reductase] + H2O + H(+). Cytochromes P450 are a group of heme-thiolate monooxygenases. In liver microsomes, this enzyme is involved in an NADPH-dependent electron transport pathway. It oxidizes a variety of structurally unrelated compounds, including steroids, fatty acids, and xenobiotics. This is Cytochrome P450 1A5 (CYP1A5) from Gallus gallus (Chicken).